Consider the following 261-residue polypeptide: 3'-5' ssDNA/RNA exonuclease TatD (261 aa).

A divalent metal cation is bound by residues Glu92, His128, and His153.

Belongs to the metallo-dependent hydrolases superfamily. TatD-type hydrolase family. TatD subfamily. Monomer. Requires Mg(2+) as cofactor.

The protein resides in the cytoplasm. In terms of biological role, 3'-5' exonuclease that prefers single-stranded DNA and RNA. May play a role in the H(2)O(2)-induced DNA damage repair. This Erwinia billingiae (strain Eb661) protein is 3'-5' ssDNA/RNA exonuclease TatD.